Reading from the N-terminus, the 218-residue chain is Glutathione S-transferase Mu 2 (218 aa).

One can recognise a GST N-terminal domain in the interval proline 2 to glycine 88. Tyrosine 7–tryptophan 8 is a binding site for glutathione. 2 positions are modified to phosphoserine: serine 27 and serine 44. Glutathione-binding positions include arginine 43–tryptophan 46, lysine 50, asparagine 59–leucine 60, and glutamine 72–serine 73. The 119-residue stretch at threonine 90–valine 208 folds into the GST C-terminal domain. Residue tyrosine 116 coordinates substrate.

It belongs to the GST superfamily. Mu family. As to quaternary structure, homodimer.

The protein resides in the cytoplasm. The enzyme catalyses RX + glutathione = an S-substituted glutathione + a halide anion + H(+). It catalyses the reaction 11(S)-hydroxy-14(S),15(S)-epoxy-(5Z,8Z,12E)-eicosatrienoate + glutathione = (11S,15S)-dihydroxy-14(R)-S-glutathionyl-(5Z,8Z,12E)-eicosatrienoate. Functionally, conjugation of reduced glutathione to a wide number of exogenous and endogenous hydrophobic electrophiles. Participates in the formation of novel hepoxilin regioisomers. Has activity toward aflatoxin B(1)-8,9-epoxide (AFBO). The sequence is that of Glutathione S-transferase Mu 2 (GSTM2) from Macaca fascicularis (Crab-eating macaque).